The chain runs to 352 residues: Phenylalanine--tRNA ligase alpha subunit (352 aa).

E258 lines the Mg(2+) pocket.

This sequence belongs to the class-II aminoacyl-tRNA synthetase family. Phe-tRNA synthetase alpha subunit type 1 subfamily. In terms of assembly, tetramer of two alpha and two beta subunits. It depends on Mg(2+) as a cofactor.

It localises to the cytoplasm. It catalyses the reaction tRNA(Phe) + L-phenylalanine + ATP = L-phenylalanyl-tRNA(Phe) + AMP + diphosphate + H(+). In Staphylococcus epidermidis (strain ATCC 35984 / DSM 28319 / BCRC 17069 / CCUG 31568 / BM 3577 / RP62A), this protein is Phenylalanine--tRNA ligase alpha subunit.